A 163-amino-acid polypeptide reads, in one-letter code: Ribonuclease P protein component (163 aa).

Positions 1-68 are disordered; the sequence is MDEKDVATQP…GGKLLSLKGD (68 aa). Positions 8-19 are enriched in polar residues; sequence TQPQETGQNPRL.

It belongs to the RnpA family. In terms of assembly, consists of a catalytic RNA component (M1 or rnpB) and a protein subunit.

The enzyme catalyses Endonucleolytic cleavage of RNA, removing 5'-extranucleotides from tRNA precursor.. Functionally, RNaseP catalyzes the removal of the 5'-leader sequence from pre-tRNA to produce the mature 5'-terminus. It can also cleave other RNA substrates such as 4.5S RNA. The protein component plays an auxiliary but essential role in vivo by binding to the 5'-leader sequence and broadening the substrate specificity of the ribozyme. The protein is Ribonuclease P protein component of Thermus thermophilus (strain ATCC BAA-163 / DSM 7039 / HB27).